We begin with the raw amino-acid sequence, 294 residues long: tRNA dimethylallyltransferase (294 aa).

10-17 (GITASGKS) provides a ligand contact to ATP. 12–17 (TASGKS) serves as a coordination point for substrate. Residues 36–39 (DSKQ) are interaction with substrate tRNA.

The protein belongs to the IPP transferase family. As to quaternary structure, monomer. Mg(2+) is required as a cofactor.

The catalysed reaction is adenosine(37) in tRNA + dimethylallyl diphosphate = N(6)-dimethylallyladenosine(37) in tRNA + diphosphate. Catalyzes the transfer of a dimethylallyl group onto the adenine at position 37 in tRNAs that read codons beginning with uridine, leading to the formation of N6-(dimethylallyl)adenosine (i(6)A). This chain is tRNA dimethylallyltransferase, found in Wolbachia sp. subsp. Drosophila simulans (strain wRi).